The chain runs to 191 residues: Probable chemoreceptor glutamine deamidase CheD (191 aa).

The protein belongs to the CheD family.

The catalysed reaction is L-glutaminyl-[protein] + H2O = L-glutamyl-[protein] + NH4(+). Its function is as follows. Probably deamidates glutamine residues to glutamate on methyl-accepting chemotaxis receptors (MCPs), playing an important role in chemotaxis. This is Probable chemoreceptor glutamine deamidase CheD from Hydrogenovibrio crunogenus (strain DSM 25203 / XCL-2) (Thiomicrospira crunogena).